We begin with the raw amino-acid sequence, 346 residues long: tRNA N6-adenosine threonylcarbamoyltransferase (346 aa).

Fe cation-binding residues include His-111 and His-115. Residues 134–138 (LVSGG), Asp-167, Gly-180, and Asn-279 each bind substrate. Residue Asp-307 coordinates Fe cation.

This sequence belongs to the KAE1 / TsaD family. Fe(2+) serves as cofactor.

It is found in the cytoplasm. It catalyses the reaction L-threonylcarbamoyladenylate + adenosine(37) in tRNA = N(6)-L-threonylcarbamoyladenosine(37) in tRNA + AMP + H(+). Its function is as follows. Required for the formation of a threonylcarbamoyl group on adenosine at position 37 (t(6)A37) in tRNAs that read codons beginning with adenine. Is involved in the transfer of the threonylcarbamoyl moiety of threonylcarbamoyl-AMP (TC-AMP) to the N6 group of A37, together with TsaE and TsaB. TsaD likely plays a direct catalytic role in this reaction. The chain is tRNA N6-adenosine threonylcarbamoyltransferase from Burkholderia pseudomallei (strain 1106a).